Reading from the N-terminus, the 293-residue chain is tRNA (guanine-N(7)-)-methyltransferase (293 aa).

Positions 1-31 (MGGDKIKKDKRQKREDYRAAMRKDDISELPR) are enriched in basic and acidic residues. Disordered regions lie at residues 1 to 33 (MGGD…PRKK) and 68 to 97 (IVDE…TPLR). Residues 75-85 (TSPPPPPPVPE) show a composition bias toward pro residues. Residues glycine 111, 134-135 (EI), 169-170 (NT), and cysteine 189 each bind S-adenosyl-L-methionine. Aspartate 192 is a catalytic residue. 267 to 269 (TEE) provides a ligand contact to S-adenosyl-L-methionine.

This sequence belongs to the class I-like SAM-binding methyltransferase superfamily. TrmB family. Forms a complex with TRM82.

The protein localises to the nucleus. It carries out the reaction guanosine(46) in tRNA + S-adenosyl-L-methionine = N(7)-methylguanosine(46) in tRNA + S-adenosyl-L-homocysteine. It functions in the pathway tRNA modification; N(7)-methylguanine-tRNA biosynthesis. In terms of biological role, catalyzes the formation of N(7)-methylguanine at position 46 (m7G46) in tRNA. The sequence is that of tRNA (guanine-N(7)-)-methyltransferase from Chaetomium globosum (strain ATCC 6205 / CBS 148.51 / DSM 1962 / NBRC 6347 / NRRL 1970) (Soil fungus).